The chain runs to 347 residues: MLTKEFNFDLPEELIAQSPSEKRGGDRLLILDKQSGKLEDRLFTELPEILPKNALMVFNNSKVRHARIYAKSKTNAVCEFLMINPMRDSDGSLWQVMAKKAKRQKPGKTFLFEDGTEAEIIESEIPLESEFRCMKFNRVIDDEWLDKYGHMPLPPYIHRKDTQEDADRYQTVYAEIYGSIAAPTAGLHFTQEVLSKIRDKGIDIEYVTLHVGLGTFLPVRAEKIEDHKMHTEHFFISEKTAQAVEKAKKEGRPIIAVGTTTVRTLESAWDEKRKELKWGNQSTDIFIYPSYKFKLIDKLFTNFHTPESSLVMLVSALAGKENIFKAYRHAVEEKYKFFSYGDAMLIL.

The protein belongs to the QueA family. In terms of assembly, monomer.

Its subcellular location is the cytoplasm. It carries out the reaction 7-aminomethyl-7-carbaguanosine(34) in tRNA + S-adenosyl-L-methionine = epoxyqueuosine(34) in tRNA + adenine + L-methionine + 2 H(+). It functions in the pathway tRNA modification; tRNA-queuosine biosynthesis. Transfers and isomerizes the ribose moiety from AdoMet to the 7-aminomethyl group of 7-deazaguanine (preQ1-tRNA) to give epoxyqueuosine (oQ-tRNA). This is S-adenosylmethionine:tRNA ribosyltransferase-isomerase from Treponema denticola (strain ATCC 35405 / DSM 14222 / CIP 103919 / JCM 8153 / KCTC 15104).